Here is a 146-residue protein sequence, read N- to C-terminus: Transcriptional regulator MraZ (146 aa).

2 SpoVT-AbrB domains span residues 4-46 (TVFR…SQTE) and 75-118 (TVKV…PEQR).

Belongs to the MraZ family. Forms oligomers.

The protein localises to the cytoplasm. The protein resides in the nucleoid. The sequence is that of Transcriptional regulator MraZ from Mesomycoplasma hyopneumoniae (strain 232) (Mycoplasma hyopneumoniae).